The sequence spans 462 residues: Dipeptidyl peptidase 1 (462 aa).

A signal peptide spans 1–24; sequence MGPWTHSLRAVLLLVLLGVCTVRS. Residues N29 and N53 are each glycosylated (N-linked (GlcNAc...) asparagine). Intrachain disulfides connect C30/C118, C54/C136, C254/C297, C290/C330, and C320/C336. The propeptide occupies 135 to 230; the sequence is ACFVGKKVES…DEIQQQILNL (96 aa). Residue C257 is part of the active site. N-linked (GlcNAc...) asparagine glycosylation is present at N275. Residues F301 and Y303 each coordinate chloride. Position 346 (Y346) interacts with chloride. Active-site residues include H404 and N426.

Belongs to the peptidase C1 family. In terms of assembly, tetramer of heterotrimers consisting of exclusion domain, heavy- and light chains. Chloride serves as cofactor. As to expression, broadly distributed, but higher levels found in lung, liver, kidney and spleen. Lower levels found in testis and brain.

Its subcellular location is the lysosome. The catalysed reaction is Release of an N-terminal dipeptide, Xaa-Yaa-|-Zaa-, except when Xaa is Arg or Lys, or Yaa or Zaa is Pro.. In terms of biological role, thiol protease. Has dipeptidylpeptidase activity. Active against a broad range of dipeptide substrates composed of both polar and hydrophobic amino acids. Proline cannot occupy the P1 position and arginine cannot occupy the P2 position of the substrate. Can act as both an exopeptidase and endopeptidase. Activates serine proteases such as elastase, cathepsin G and granzymes A and B. The protein is Dipeptidyl peptidase 1 (Ctsc) of Mus musculus (Mouse).